The chain runs to 61 residues: uncharacterized protein (61 aa).

This is an uncharacterized protein from Frog virus 3 (isolate Goorha) (FV-3).